The sequence spans 892 residues: DNA mismatch repair protein MutS (892 aa).

ATP is bound at residue 607 to 614 (GPNMSGKS).

The protein belongs to the DNA mismatch repair MutS family.

This protein is involved in the repair of mismatches in DNA. It is possible that it carries out the mismatch recognition step. This protein has a weak ATPase activity. The chain is DNA mismatch repair protein MutS from Bacillus cereus (strain G9842).